The sequence spans 149 residues: Calmodulin-2 (149 aa).

4 consecutive EF-hand domains span residues 8-43, 44-79, 81-116, and 117-149; these read DQIS…LGQN, PTEA…KMKD, DSEE…LGEK, and LTDE…MMAK. Aspartate 21, aspartate 23, aspartate 25, cysteine 27, glutamate 32, aspartate 57, aspartate 59, asparagine 61, threonine 63, glutamate 68, aspartate 94, aspartate 96, asparagine 98, glutamate 105, aspartate 130, aspartate 132, aspartate 134, glutamine 136, and glutamate 141 together coordinate Ca(2+).

It belongs to the calmodulin family. As to quaternary structure, interacts with KCBP and CIP111. Binds to IQD1 and IQD20.

It localises to the cytoplasm. Its subcellular location is the cytoskeleton. Its function is as follows. Calmodulin mediates the control of a large number of enzymes, ion channels and other proteins by Ca(2+). Among the enzymes to be stimulated by the calmodulin-Ca(2+) complex are a number of protein kinases and phosphatases. The sequence is that of Calmodulin-2 (CAM2) from Arabidopsis thaliana (Mouse-ear cress).